The primary structure comprises 580 residues: Laccase-5 (580 aa).

The signal sequence occupies residues 1 to 25 (MDVTKSLLCFISFVAFLLFSSVAEA). Plastocyanin-like domains are found at residues 34-150 (IIQA…PPAG) and 160-312 (RNVP…YKSA). Residue asparagine 80 is glycosylated (N-linked (GlcNAc...) asparagine). Cu cation contacts are provided by histidine 84, histidine 86, histidine 129, and histidine 131. Residues asparagine 189, asparagine 300, asparagine 340, asparagine 392, asparagine 402, asparagine 410, and asparagine 443 are each glycosylated (N-linked (GlcNAc...) asparagine). The Plastocyanin-like 3 domain occupies 428-564 (DFPAKPPVKF…AMAFLVENGN (137 aa)). Residues histidine 481, histidine 484, histidine 486, histidine 543, cysteine 544, histidine 545, and histidine 549 each coordinate Cu cation.

This sequence belongs to the multicopper oxidase family. The cofactor is Cu cation. Ubiquitous and constitutive.

Its subcellular location is the secreted. It localises to the extracellular space. The protein resides in the apoplast. The catalysed reaction is 4 hydroquinone + O2 = 4 benzosemiquinone + 2 H2O. Lignin degradation and detoxification of lignin-derived products. This is Laccase-5 (LAC5) from Arabidopsis thaliana (Mouse-ear cress).